A 47-amino-acid chain; its full sequence is MVTEGLKPHISIKKKKRKSGFLARMRTKSGRKIIARRRRKGRKRLAP.

Positions 1–47 (MVTEGLKPHISIKKKKRKSGFLARMRTKSGRKIIARRRRKGRKRLAP) are disordered. Positions 10 to 47 (ISIKKKKRKSGFLARMRTKSGRKIIARRRRKGRKRLAP) are enriched in basic residues.

It belongs to the bacterial ribosomal protein bL34 family.

The chain is Large ribosomal subunit protein bL34 (rpmH) from Aquifex aeolicus (strain VF5).